An 833-amino-acid chain; its full sequence is Leucine--tRNA ligase (833 aa).

The short motif at 41–52 is the 'HIGH' region element; it reads PYPSGAGLHVGH. A 'KMSKS' region motif is present at residues 610-614; sequence KMSKS. Position 613 (Lys-613) interacts with ATP.

It belongs to the class-I aminoacyl-tRNA synthetase family.

It is found in the cytoplasm. The enzyme catalyses tRNA(Leu) + L-leucine + ATP = L-leucyl-tRNA(Leu) + AMP + diphosphate. This Streptococcus suis (strain 05ZYH33) protein is Leucine--tRNA ligase.